A 950-amino-acid chain; its full sequence is Serine/threonine-protein kinase atg1 (950 aa).

Residues 6–311 (YTRLDEIGRG…FPDFFENGVI (306 aa)) enclose the Protein kinase domain. Residues 12–20 (IGRGSFATV) and Lys35 contribute to the ATP site. Asp149 serves as the catalytic Proton acceptor. 5 disordered regions span residues 314–425 (PIPG…HATA), 443–467 (RQRG…LREE), 505–570 (QGGI…QSPT), 671–690 (VQTD…NPDS), and 926–950 (PTPS…TPPK). Composition is skewed to polar residues over residues 370–389 (GLTQ…PTTT), 447–458 (RNTFSEGSPQTD), and 511–520 (GAQTGALSRR). A compositionally biased stretch (basic and acidic residues) spans 549 to 565 (SRADSMHNRQSSYERRY).

It belongs to the protein kinase superfamily. Ser/Thr protein kinase family. APG1/unc-51/ULK1 subfamily. In terms of assembly, homodimer. Forms a ternary complex with ATG13 and ATG17.

The protein localises to the cytoplasm. The protein resides in the preautophagosomal structure membrane. It catalyses the reaction L-seryl-[protein] + ATP = O-phospho-L-seryl-[protein] + ADP + H(+). It carries out the reaction L-threonyl-[protein] + ATP = O-phospho-L-threonyl-[protein] + ADP + H(+). Functionally, serine/threonine protein kinase involved in the cytoplasm to vacuole transport (Cvt) and found to be essential in autophagy, where it is required for the formation of autophagosomes. Involved in the clearance of protein aggregates which cannot be efficiently cleared by the proteasome. Required for selective autophagic degradation of the nucleus (nucleophagy) as well as for mitophagy which contributes to regulate mitochondrial quantity and quality by eliminating the mitochondria to a basal level to fulfill cellular energy requirements and preventing excess ROS production. Also involved in endoplasmic reticulum-specific autophagic process, in selective removal of ER-associated degradation (ERAD) substrates. Plays a key role in ATG9 and ATG23 cycling through the pre-autophagosomal structure and is necessary to promote ATG18 binding to ATG9 through phosphorylation of ATG9. Catalyzes phosphorylation of ATG4, decreasing the interaction between ATG4 and ATG8 and impairing deconjugation of PE-conjugated forms of ATG8. This Neosartorya fischeri (strain ATCC 1020 / DSM 3700 / CBS 544.65 / FGSC A1164 / JCM 1740 / NRRL 181 / WB 181) (Aspergillus fischerianus) protein is Serine/threonine-protein kinase atg1.